Consider the following 329-residue polypeptide: IDS-like terpene synthase 1 (329 aa).

The Mg(2+) site is built by Asp-79 and Asp-83.

Belongs to the FPP/GGPP synthase family. Mg(2+) serves as cofactor.

The catalysed reaction is (2E)-geranyl diphosphate + H2O = linalool + diphosphate. The enzyme catalyses (2E,6E)-farnesyl diphosphate + H2O = (6E)-nerolidol + diphosphate. Terpene synthase that shows monoterpene synthase activity and produces linalool, using geranyl diphosphate (GPP) as substrate. Also shows sesquiterpene synthase activity as it is able to convert farnesyl diphosphate (FPP) into (E)-nerolidol. The polypeptide is IDS-like terpene synthase 1 (Melampsora lini (Rust fungus)).